Reading from the N-terminus, the 153-residue chain is Ribosome maturation factor RimP (153 aa).

Belongs to the RimP family.

Its subcellular location is the cytoplasm. Functionally, required for maturation of 30S ribosomal subunits. The chain is Ribosome maturation factor RimP from Coxiella burnetii (strain Dugway 5J108-111).